A 484-amino-acid chain; its full sequence is Antibiotic efflux pump outer membrane protein ArpC (484 aa).

The signal sequence occupies residues 1 to 17 (MTKSLLSLAVTAFILGG). C18 carries N-palmitoyl cysteine lipidation. A lipid anchor (S-diacylglycerol cysteine) is attached at C18.

Belongs to the outer membrane factor (OMF) (TC 1.B.17) family.

It is found in the cell outer membrane. The outer membrane component of an antibiotic efflux pump. Confers resistance to numerous structurally unrelated antibiotics such as carbenicillin, chloramphenicol, erythromycin, novobiocin, streptomycin and tetracycline. Is not involved in organic solvent efflux. In Pseudomonas putida (Arthrobacter siderocapsulatus), this protein is Antibiotic efflux pump outer membrane protein ArpC (arpC).